A 274-amino-acid polypeptide reads, in one-letter code: Thiamine kinase (274 aa).

It belongs to the thiamine kinase family.

The enzyme catalyses thiamine + ATP = thiamine phosphate + ADP + H(+). It functions in the pathway cofactor biosynthesis; thiamine diphosphate biosynthesis; thiamine phosphate from thiamine: step 1/1. Catalyzes the ATP-dependent phosphorylation of thiamine to thiamine phosphate. Is involved in thiamine salvage. This chain is Thiamine kinase, found in Shigella boydii serotype 4 (strain Sb227).